A 232-amino-acid polypeptide reads, in one-letter code: Small ribosomal subunit protein uS2 (232 aa).

Belongs to the universal ribosomal protein uS2 family.

This is Small ribosomal subunit protein uS2 from Syntrophomonas wolfei subsp. wolfei (strain DSM 2245B / Goettingen).